A 323-amino-acid polypeptide reads, in one-letter code: Cytoskeleton protein RodZ (323 aa).

Residues 1 to 111 (MNTEASQDKT…LGKRRKKRDG (111 aa)) lie on the Cytoplasmic side of the membrane. Positions 19 to 71 (LRQAREQLGLSQQAVAERLCLKMSTVRDIEEDNLSADLASTFVRGYIRSYAKL) constitute an HTH cro/C1-type domain. The H-T-H motif DNA-binding region spans 30-49 (QQAVAERLCLKMSTVRDIEE). The helical; Signal-anchor for type II membrane protein transmembrane segment at 112–132 (WLMSFTWLIVFVVVGLTGAWW) threads the bilayer. Topologically, residues 133 to 323 (WQNHKAQQEE…RVARLTVAAQ (191 aa)) are periplasmic. Polar residues-rich tracts occupy residues 149–172 (QSSA…NADN) and 179–214 (NGST…SPSQ). The segment at 149–236 (QSSAQLSQNN…APLPTADAGV (88 aa)) is disordered. The segment covering 215-234 (TTLPETTPAAPTAPLPTADA) has biased composition (low complexity).

It belongs to the RodZ family.

The protein localises to the cell inner membrane. Cytoskeletal protein that is involved in cell-shape control through regulation of the length of the long axis. This is Cytoskeleton protein RodZ from Serratia proteamaculans (strain 568).